The sequence spans 352 residues: MARSAFGWGFSVIAVLMVGSITACNTTTTTEPGQGENASQAPANLTLVSYAVTRDAFEKIIPKFTEEWKSKTGQDVTFEQSYGGSGSQTRAVVDGLEADIVALALSSDVQKIESAGLIQPGWEQEAPNGSIVTNSVIAFVTKASDNIKVEKWADLANPEVKVITANPKTSGGARWNFLGIWGSVTKTGGTEEQAFDFAGKVLANAPVLPKDARESTDVFYKQGQGNVLLNYENEVLLAKQKGENQPYIIPQDFNVSISGPVAVVDTTVDKKGTREVRDAFVQYLFTPEAQQIFAETGFRPVNEEVLAKFASQYPKVENLATIEEFGGWKKAQAEFFDEGGIFDKVITKIGRQ.

The N-terminal stretch at methionine 1–glutamine 40 is a signal peptide.

This sequence belongs to the prokaryotic sulfate-binding protein family.

The protein resides in the periplasm. Its function is as follows. This protein specifically binds sulfate and is involved in its transmembrane transport. The chain is Sulfate-binding protein (sbpA) from Synechocystis sp. (strain ATCC 27184 / PCC 6803 / Kazusa).